Reading from the N-terminus, the 105-residue chain is uncharacterized protein (105 aa).

This sequence belongs to the asfivirus C122R family.

It localises to the virion. This is an uncharacterized protein from African swine fever virus (strain Badajoz 1971 Vero-adapted) (Ba71V).